The following is a 314-amino-acid chain: tRNA dimethylallyltransferase (314 aa).

11–18 (GPTGSGKT) serves as a coordination point for ATP. Substrate is bound at residue 13-18 (TGSGKT). The interaction with substrate tRNA stretch occupies residues 36-39 (DSMQ).

It belongs to the IPP transferase family. Monomer. Mg(2+) serves as cofactor.

The enzyme catalyses adenosine(37) in tRNA + dimethylallyl diphosphate = N(6)-dimethylallyladenosine(37) in tRNA + diphosphate. In terms of biological role, catalyzes the transfer of a dimethylallyl group onto the adenine at position 37 in tRNAs that read codons beginning with uridine, leading to the formation of N6-(dimethylallyl)adenosine (i(6)A). The protein is tRNA dimethylallyltransferase of Chlamydia muridarum (strain MoPn / Nigg).